Here is a 524-residue protein sequence, read N- to C-terminus: Importin subunit alpha-1 (524 aa).

A disordered region spans residues 1-42 (MGDEFRPSHEERSKMYKSNVRDQNEMRRKRREDEVQIRKNRR). Residues 1-59 (MGDEFRPSHEERSKMYKSNVRDQNEMRRKRREDEVQIRKNRRDEKFERNRQITVQRSLS) enclose the IBB domain.

This sequence belongs to the importin alpha family. Forms a complex with an importin beta subunit. Adult germline tissues.

The protein resides in the cytoplasm. Functionally, binds specifically and directly to substrates containing either a simple or bipartite NLS motif. Promotes docking of import substrates to the nuclear envelope. Seems to act as a cytosolic receptor for both simple and bipartite NLS motifs. The sequence is that of Importin subunit alpha-1 (ima-1) from Caenorhabditis elegans.